Here is a 388-residue protein sequence, read N- to C-terminus: Succinate--CoA ligase [ADP-forming] subunit beta (388 aa).

In terms of domain architecture, ATP-grasp spans 9–244; that stretch reads KEILRKFGVA…LDEEDPAEIE (236 aa). Residues Lys-46, 53-55, Glu-99, Ala-102, and Glu-107 contribute to the ATP site; that span reads GRG. Residues Asn-199 and Asp-213 each coordinate Mg(2+). Substrate-binding positions include Asn-264 and 321–323; that span reads GIM.

It belongs to the succinate/malate CoA ligase beta subunit family. As to quaternary structure, heterotetramer of two alpha and two beta subunits. Requires Mg(2+) as cofactor.

It catalyses the reaction succinate + ATP + CoA = succinyl-CoA + ADP + phosphate. The enzyme catalyses GTP + succinate + CoA = succinyl-CoA + GDP + phosphate. The protein operates within carbohydrate metabolism; tricarboxylic acid cycle; succinate from succinyl-CoA (ligase route): step 1/1. Succinyl-CoA synthetase functions in the citric acid cycle (TCA), coupling the hydrolysis of succinyl-CoA to the synthesis of either ATP or GTP and thus represents the only step of substrate-level phosphorylation in the TCA. The beta subunit provides nucleotide specificity of the enzyme and binds the substrate succinate, while the binding sites for coenzyme A and phosphate are found in the alpha subunit. The sequence is that of Succinate--CoA ligase [ADP-forming] subunit beta from Burkholderia ambifaria (strain MC40-6).